The sequence spans 1789 residues: Genome polyprotein (1789 aa).

The interval 1 to 25 (MMMASKDVVPTAASSENANNNSSIK) is disordered. The interval 1-183 (MMMASKDVVP…MCPLPPVDQR (183 aa)) is interaction with host MAP1LC3A/LC3. Over residues 12–23 (AASSENANNNSS) the composition is skewed to low complexity. Positions 184–398 (STTPATEPTI…ASLLPDFHLQ (215 aa)) are interaction with NTPase. Residues 301-398 (HPTQDWSRDT…ASLLPDFHLQ (98 aa)) are interaction with NS4. 2 host ER membrane association regions span residues 318–349 (KLEMVRDAVLAAINGLVSRPFKDLLGKLKPLN) and 360–398 (TFMGVVEMVVLLLELFGIFWNPPDVSNFIASLLPDFHLQ). The tract at residues 399-574 (GPEDLARDLV…GKTKAAEHLA (176 aa)) is interaction with NS1-2 and NS4 and homooligomerization. Positions 532–697 (RISMARAALA…EHTRKVSPGD (166 aa)) constitute an SF3 helicase domain. Residue 560 to 567 (GPPGIGKT) coordinates ATP. Residues 651–756 (AIVITTNAPG…AVALTMERQD (106 aa)) are important for mitochondrion targeting. A functions as endoplasmic reticulum export signal region spans residues 826 to 832 (YIIESDG). The host membrane association stretch occupies residues 865-910 (RAVAYASCFQSAITTILQMAGSALVINRAVKRMFGTRTAAMALEGP). Residues 958-981 (DAVPEGKNKGKTKKGRGRKNNYNA) form a disordered region. The span at 966 to 976 (KGKTKKGRGRK) shows a compositional bias: basic residues. An acidic region spans residues 989–994 (DEEYEE). The residue at position 992 (tyrosine 992) is an O-(5'-phospho-RNA)-tyrosine. The segment at 1084–1100 (WADDDREVDYNEKINFE) is interaction with host EIF4G. In terms of domain architecture, Peptidase C37 spans 1101-1281 (APPTLWSRVT…QAGEGETALE (181 aa)). Residues histidine 1130, glutamate 1154, and cysteine 1239 each act as for 3CLpro activity in the active site. Positions 1516–1637 (KNHFDADYTA…STDIDFDPAR (122 aa)) constitute a RdRp catalytic domain. Residues aspartate 1520, aspartate 1522, aspartate 1624, and glutamate 1625 each coordinate Mg(2+).

Homodimer. Homooligomer. Interacts with NTPase; this interaction increases the proapoptotic activity of the NTPase and is crucial for the formation of the viral replication complex. Interacts with NS4; this interaction is crucial for the formation of the viral replication complex. Interacts (via N-terminus) with host VAPA. Interacts with host MAP1LC3A/LC3; this interaction does not seem to be linked to host autophagy, but rather plays a role in the formation of viral factories. As to quaternary structure, homooligomer. Interacts with NS1-2; this interaction increases the proapoptotic activity of the NTPase and is crucial for the formation of the viral replication complex. Interacts with NS4; this interaction increases the proapoptotic activity of the NTPase. In terms of assembly, homodimer. Monomer; in solution. Interacts with NTPase; this interaction increases the proapoptotic activity of the NTPase. Interacts with NS1-2; this interaction is crucial for the formation of the viral replication complex. As to quaternary structure, monomer. Interacts with the RNA-directed RNA polymerase; this interaction induces the multimerization of the RdRp and enhances its activity. Interacts with host IEF4G1; this interaction plays a role in translation of viral proteins. In terms of assembly, homohexamer; also forms fibrous hexameric oligomer. Interacts with the viral genome-linked protein; this interaction induces the multimerization of the RdRp and enhances its activity. Mg(2+) is required as a cofactor. Requires Mn(2+) as cofactor. Post-translationally, specific enzymatic cleavages in vivo yield mature proteins. 3CLpro is first autocatalytically cleaved, then processes the whole polyprotein. NS1/2-3 and NS3-4 sites are cleaved rapidly and NS4-5, NS5-6, and NS6-7 sites are processed subsequently and less efficiently. VPg is uridylylated by the polymerase and is covalently attached to the 5'-end of the polyadenylated genomic and subgenomic RNAs. This uridylylated form acts as a nucleotide-peptide primer for the polymerase. In terms of processing, cleaved by host CASP3/caspase 3 at 18-22 h.p.i. The cleavage allows NS1 secretion, which is essential for intestinal infection and resistance to IFN-lambda.

The protein resides in the host Golgi apparatus membrane. It is found in the secreted. It localises to the host endoplasmic reticulum membrane. Its subcellular location is the host cytoplasm. The protein localises to the host perinuclear region. The enzyme catalyses a ribonucleoside 5'-triphosphate + H2O = a ribonucleoside 5'-diphosphate + phosphate + H(+). It catalyses the reaction Endopeptidase with a preference for cleavage when the P1 position is occupied by Glu-|-Xaa and the P1' position is occupied by Gly-|-Yaa.. The catalysed reaction is RNA(n) + a ribonucleoside 5'-triphosphate = RNA(n+1) + diphosphate. With respect to regulation, inhibited by the chemical compound K36/GC376, which covalently binds to the nucleophilic cysteine residue. Inhibited by various macrocyclic inhibitors. Inhibited by the guanidine salt GuHCl. Induces the proliferation of the host smooth ER membranes forming long tubular structures. These remodeled membranes probably form the viral factories that contain the replication complex. Induces the disassembly of host Golgi. May play a role in viral replication by interacting with host VAPA, a vesicle-associated membrane protein that plays a role in SNARE-mediated vesicle fusion. This interaction may target replication complex to intracellular membranes. In terms of biological role, displays NTPase activity and RNA helix-unwinding activity. Displays RNA chaperone-like activity and destabilizes dsRNA. Induces the formation of convoluted membranes derived from the host ER. These remodeled membranes probably form the viral factories that contain the replication complex. Initiates host cell death by targeting the mitochondrial outer membrane, leading to the permeabilization of mitochondria, programmed host cell death and viral egress. Probably plays a role in preventing the assembly of host stress granules. Its function is as follows. Probable key protein responsible for the formation of membrane alterations by the virus. Induces the formation of convoluted membranes derived from the host ER. These remodeled membranes probably form the viral factories that contain the replication complex. May play a role in targeting replication complex to intracellular membranes. Induces the disassembly of host Golgi and antagonism of Golgi-dependent cellular protein secretion, probably via the mislocalization of COPII-coated vesicles. Functionally, viral genome-linked protein is covalently linked to the 5'-end of the positive-strand, negative-strand genomic RNAs and subgenomic RNA. Acts as a genome-linked replication primer. May recruit ribosome to viral RNA thereby promoting viral proteins translation. Interacts with host translation initiation complex to allow the translation of viral proteins. Induces the formation of aggregates of RNA-directed RNA polymerase in the presence of RNA. Through its interaction with the viral RNA-directed RNA polymerase, plays a crucial role in enhancing the polymerase activity. Processes the polyprotein. 3CLpro-RdRp is first released by autocleavage, then all other proteins are cleaved. May cleave host polyadenylate-binding protein thereby inhibiting cellular translation. In terms of biological role, replicates genomic and antigenomic RNA by recognizing replications specific signals. Also transcribes a subgenomic mRNA by initiating RNA synthesis internally on antigenomic RNA. This sgRNA codes for structural proteins. Catalyzes the covalent attachment VPg with viral RNAs. In Norovirus (strain Human/NoV/United States/Norwalk/1968/GI) (Hu/NV/NV/1968/US), this protein is Genome polyprotein.